A 607-amino-acid polypeptide reads, in one-letter code: DNA mismatch repair protein MutL (607 aa).

This sequence belongs to the DNA mismatch repair MutL/HexB family.

In terms of biological role, this protein is involved in the repair of mismatches in DNA. It is required for dam-dependent methyl-directed DNA mismatch repair. May act as a 'molecular matchmaker', a protein that promotes the formation of a stable complex between two or more DNA-binding proteins in an ATP-dependent manner without itself being part of a final effector complex. The sequence is that of DNA mismatch repair protein MutL from Paramagnetospirillum magneticum (strain ATCC 700264 / AMB-1) (Magnetospirillum magneticum).